The following is a 309-amino-acid chain: Aspartate carbamoyltransferase catalytic subunit (309 aa).

Positions 57 and 58 each coordinate carbamoyl phosphate. Lys-86 is a binding site for L-aspartate. Carbamoyl phosphate contacts are provided by Arg-107, His-135, and Gln-138. The L-aspartate site is built by Arg-168 and Arg-228. The carbamoyl phosphate site is built by Leu-267 and Pro-268.

This sequence belongs to the aspartate/ornithine carbamoyltransferase superfamily. ATCase family. Heterooligomer of catalytic and regulatory chains.

The enzyme catalyses carbamoyl phosphate + L-aspartate = N-carbamoyl-L-aspartate + phosphate + H(+). The protein operates within pyrimidine metabolism; UMP biosynthesis via de novo pathway; (S)-dihydroorotate from bicarbonate: step 2/3. Its function is as follows. Catalyzes the condensation of carbamoyl phosphate and aspartate to form carbamoyl aspartate and inorganic phosphate, the committed step in the de novo pyrimidine nucleotide biosynthesis pathway. The chain is Aspartate carbamoyltransferase catalytic subunit from Cenarchaeum symbiosum (strain A).